The chain runs to 282 residues: Glycine betaine transport system permease protein OpuAB (282 aa).

Topologically, residues 1–18 are extracellular; it reads MDRLPRIPLADIIDRFVD. A helical transmembrane segment spans residues 19 to 39; it reads WITMTFGGFFDGIANGLAAFV. Residues 40-44 are Cytoplasmic-facing; sequence NGIVT. The helical transmembrane segment at 45–65 threads the bilayer; sequence GLGFIPSILLTIIFAALAWWI. Residues 66 to 69 are Extracellular-facing; the sequence is STRG. A helical membrane pass occupies residues 70–90; it reads IALFTLIGFLLIDYLGYWDPM. Positions 90–269 constitute an ABC transmembrane type-1 domain; sequence MLQTLALVLT…IVAITLDRIT (180 aa). The Cytoplasmic segment spans residues 91 to 93; that stretch reads LQT. A helical membrane pass occupies residues 94 to 114; the sequence is LALVLTSVIISIVVGVPIGIW. Residues 115–137 are Extracellular-facing; it reads ASQKETVRRIVTPILDLMQTMPA. Residues 138 to 158 traverse the membrane as a helical segment; the sequence is FVYLLPAIFFFNIGVVPGVVA. Residues 159 to 215 lie on the Cytoplasmic side of the membrane; the sequence is SVIFAMPPTIRMTVLGIKQVPADLIEATEAFGSTTAQRLFKVQLPLATKTILAGINQ. The chain crosses the membrane as a helical span at residues 216 to 236; the sequence is SIMLALSMVVIAAMVGAPGLG. Residues 237-242 lie on the Extracellular side of the membrane; the sequence is SEVYSA. The chain crosses the membrane as a helical span at residues 243–263; that stretch reads VTQLKTGVGVEAGIAIVIVAI. Over 264–282 the chain is Cytoplasmic; the sequence is TLDRITQNIKVKKKSRGNA.

It belongs to the binding-protein-dependent transport system permease family. CysTW subfamily. The complex is composed of two ATP-binding proteins (OpuAA), two transmembrane proteins (OpuAB) and a solute-binding protein (OpuAC).

It is found in the cell membrane. Functionally, involved in a multicomponent binding-protein-dependent transport system for glycine betaine; probably responsible for the translocation of the substrate across the membrane. The protein is Glycine betaine transport system permease protein OpuAB (opuAB) of Bacillus subtilis (strain 168).